A 151-amino-acid polypeptide reads, in one-letter code: Small ribosomal subunit protein uS11 (151 aa).

A disordered region spans residues 131-151; that stretch reads DVTPVPSDSTRRKGGRRGRRL. The span at 142 to 151 shows a compositional bias: basic residues; sequence RKGGRRGRRL.

Belongs to the universal ribosomal protein uS11 family.

This is Small ribosomal subunit protein uS11 from Bombyx mori (Silk moth).